The sequence spans 376 residues: Nuclear egress protein 1 (376 aa).

The residue at position 19 (Ser-19) is a Phosphoserine. The disordered stretch occupies residues Arg-22–Pro-57. A compositionally biased stretch (polar residues) spans Val-33–Asn-45. The CCCH-type zinc finger occupies Cys-106–His-211. A disordered region spans residues Val-316–Pro-376. Over residues Val-317 to Pro-332 the composition is skewed to polar residues.

The protein belongs to the herpesviridae NEC1 protein family. Forms a heterohexameric complex with NEC2. Interacts with capsid vertex specific component 2/CVC2; this interaction directs the capsid to the host inner nuclear membrane to initiate budding. In terms of processing, phosphorylated at serine residues in the N-terminus. This phosphorylation regulates the localization within the inner nuclear membrane. Phosphorylation by viral kinase UL97 at Ser-19 plays an important role for correct viral nuclear egress complex (NEC) localization.

The protein localises to the host nucleus inner membrane. Functionally, plays an essential role in virion nuclear egress, the first step of virion release from infected cell. Within the host nucleus, NEC1 interacts with the newly formed capsid through the vertexes and directs it to the inner nuclear membrane by associating with NEC2. Induces the budding of the capsid at the inner nuclear membrane as well as its envelopment into the perinuclear space. There, the NEC1/NEC2 complex promotes the fusion of the enveloped capsid with the outer nuclear membrane and the subsequent release of the viral capsid into the cytoplasm where it will reach the secondary budding sites in the host Golgi or trans-Golgi network. The protein is Nuclear egress protein 1 of Homo sapiens (Human).